We begin with the raw amino-acid sequence, 195 residues long: COMM domain-containing protein 3 (195 aa).

Residues 124–193 (HITDVSWRLE…DASKSLERAT (70 aa)) enclose the COMM domain.

It belongs to the COMM domain-containing protein 3 family. In terms of assembly, component of the commander complex consisting of the CCC subcomplex and the retriever subcomplex. Component of the CCC (COMMD/CCDC22/CCDC93) subcomplex consisting of COMMD1, COMMD2, COMMD3, COMMD4, COMMD5, COMMD6, COMMD7, COMMD8, COMMD9, COMMD10, CCDC22 and CCDC93; within the complex forms a heterodimer with COMMD2. Interacts with NFKB1/p105. Interacts with CCDC22, CCDC93, SCNN1B, CUL3, CUL4A, CUL4B, CUL5.

The protein localises to the cytoplasm. The protein resides in the nucleus. In terms of biological role, scaffold protein in the commander complex that is essential for endosomal recycling of transmembrane cargos; the commander complex is composed of the CCC subcomplex and the retriever subcomplex. May modulate activity of cullin-RING E3 ubiquitin ligase (CRL) complexes. May down-regulate activation of NF-kappa-B. Modulates Na(+) transport in epithelial cells by regulation of apical cell surface expression of amiloride-sensitive sodium channel (ENaC) subunits. This chain is COMM domain-containing protein 3 (Commd3), found in Mus musculus (Mouse).